The following is a 497-amino-acid chain: FAD-linked oxidoreductase fogF (497 aa).

The first 18 residues, 1 to 18 (MRRNILTALACSWLTAHA), serve as a signal peptide directing secretion. An FAD-binding PCMH-type domain is found at 59 to 229 (NAPTYAGAIS…TSATYKLHKL (171 aa)).

The protein belongs to the oxygen-dependent FAD-linked oxidoreductase family. FAD serves as cofactor.

It participates in secondary metabolite biosynthesis. In terms of biological role, FAD-linked oxidoreductase; part of the gene cluster that mediates the biosynthesis of flavoglaucin and congeners (including aspergin, dihydroauroglaucin and auroglaucin), prenylated salicylaldehyde derivatives carrying a saturated or an unsaturated C-7 side chain. The PKS fogA releases the carboxylic acid (8E,10E,12E)-3,5,7-trihydroxytetradeca-8,10,12-trienoic acid as its product, as well as derivatives with one and two double bonds. FogA is indeed able to reduce the initial triketide, thus being at least partially responsible for the differently saturated heptyl side chains of flavoglaucin congeners. The oxidoreductases fogB, fogC and fogD modify the nascent polyketide in fogA-bound form and, together, fogA, fogB, fogC and fogD are necessary for the formation of the aromatic core and the cyclized PKS products are released as salicyl alcohols. In particular, fogB is responsible for oxidation of a hydroxyl group or reduction of remaining double bond(s) at the C-7 residue whereas fogD is probably involved in the reductive release of the modified PKS products. The cytochrome P450 monooxygenase fogE is then responsible for the hydroxylation at C-3 of the benzene ring. The fogE products are substrates of the prenyltransferase fogH and the prenylated benzyl alcohols are subsequently oxidized by the fogF to produce the final aryl aldehydes flavoglaucin and congeners. The short-chain dehydrogenase fogG does not seem to be involved in the biosynthesis of the prenylated salicylaldehyde derivatives. The sequence is that of FAD-linked oxidoreductase fogF from Aspergillus ruber (strain CBS 135680).